Here is a 527-residue protein sequence, read N- to C-terminus: Probable protein kinase UbiB (527 aa).

Residues 23 to 43 (ELLLELPLPFWLRALSWLLPW) form a helical membrane-spanning segment. A Protein kinase domain is found at 125 to 488 (RFDSQPLASA…ESDARDQWPL (364 aa)). Residues 131–139 (LASASVAQV) and Lys153 each bind ATP. Residue Asp288 is the Proton acceptor of the active site. Residues 504–524 (LAPLLATWPAWLMVGGGLYLV) form a helical membrane-spanning segment.

It belongs to the ABC1 family. UbiB subfamily.

The protein localises to the cell inner membrane. It functions in the pathway cofactor biosynthesis; ubiquinone biosynthesis [regulation]. In terms of biological role, is probably a protein kinase regulator of UbiI activity which is involved in aerobic coenzyme Q (ubiquinone) biosynthesis. In Ectopseudomonas mendocina (strain ymp) (Pseudomonas mendocina), this protein is Probable protein kinase UbiB.